The primary structure comprises 99 residues: Signal recognition particle 19 kDa protein (99 aa).

It belongs to the SRP19 family. Part of the signal recognition particle protein translocation system, which is composed of SRP and FtsY. Archaeal SRP consists of a 7S RNA molecule of 300 nucleotides and two protein subunits: SRP54 and SRP19.

It localises to the cytoplasm. Involved in targeting and insertion of nascent membrane proteins into the cytoplasmic membrane. Binds directly to 7S RNA and mediates binding of the 54 kDa subunit of the SRP. This Ignicoccus hospitalis (strain KIN4/I / DSM 18386 / JCM 14125) protein is Signal recognition particle 19 kDa protein.